The primary structure comprises 601 residues: Elongation factor 4 (601 aa).

The 183-residue stretch at 7–189 (ELIRNFSIIA…ALVTRLPPPK (183 aa)) folds into the tr-type G domain. GTP-binding positions include 19-24 (DHGKST) and 136-139 (NKID).

Belongs to the TRAFAC class translation factor GTPase superfamily. Classic translation factor GTPase family. LepA subfamily.

The protein resides in the cell inner membrane. It catalyses the reaction GTP + H2O = GDP + phosphate + H(+). Functionally, required for accurate and efficient protein synthesis under certain stress conditions. May act as a fidelity factor of the translation reaction, by catalyzing a one-codon backward translocation of tRNAs on improperly translocated ribosomes. Back-translocation proceeds from a post-translocation (POST) complex to a pre-translocation (PRE) complex, thus giving elongation factor G a second chance to translocate the tRNAs correctly. Binds to ribosomes in a GTP-dependent manner. In Acidiphilium cryptum (strain JF-5), this protein is Elongation factor 4.